A 398-amino-acid polypeptide reads, in one-letter code: Tear acid lipase-like protein (398 aa).

The signal sequence occupies residues methionine 1–cysteine 19. Serine 170 functions as the Nucleophile in the catalytic mechanism. Cysteine 243 and cysteine 252 are disulfide-bonded. Asparagine 268 carries N-linked (GlcNAc...) asparagine glycosylation. Catalysis depends on charge relay system residues aspartate 340 and histidine 369.

The protein belongs to the AB hydrolase superfamily. Lipase family. In terms of assembly, monomer. Post-translationally, N-glycosylated. Expressed in female lacrimal gland acinar cells from where it is secreted into tears (at protein level).

It localises to the secreted. Functionally, female-specific protein which lacks detectable lipase activity against a range of substrates. Binds the hydrophobic lipid 1-aminoanthracene with high affinity. The polypeptide is Tear acid lipase-like protein (Mesocricetus auratus (Golden hamster)).